We begin with the raw amino-acid sequence, 470 residues long: MHLATETAPSMATYSSTYFNSSLHAHSTSVSSSNLAAMNSLDTHPGYMGNSLNGPRSMTTNMNSMCSPGNNIGLPYRVIASSMGPHSLPSPTILNYPGHESPPFNILNNVSCSEDIKPPPGLSSLGSPCMNNYSCNSPGALTKHICAICGDRSSGKHYGVYSCEGCKGFFKRTIRKDLVYTCRDSKDCLIDKRQRNRCQYCRYQKCLAMGMKREAVQEERQRSREKSDTEAESTSSTSEEMPVERILEAELAVDPKIEAFGDAGLPNSTNDPVTNICHAADKQLFTLVEWAKRIPYFSDLPLEDQVILLRAGWNELLIASFSHRSVSVQDGILLATGLHVHRSSAHNAGVGSIFDRVLTELVSKMKDMDMDKSELGCLRAIVLFNPDAKGLSNAAEVEALREKVYATLESYTKQKYPDQPGRFAKLLLRLPALRSIGLKCLEHLFFFKLIGDTPIDTFLMEMLETPHQIS.

A modulating region spans residues 1–145; sequence MHLATETAPS…NSPGALTKHI (145 aa). 2 consecutive NR C4-type zinc fingers follow at residues 146–166 and 182–206; these read CAICGDRSSGKHYGVYSCEGC and CRDSKDCLIDKRQRNRCQYCRYQKC. The nuclear receptor DNA-binding region spans 146–211; it reads CAICGDRSSG…RYQKCLAMGM (66 aa). A hinge region spans residues 212–235; the sequence is KREAVQEERQRSREKSDTEAESTS. Residues 217-229 are compositionally biased toward basic and acidic residues; the sequence is QEERQRSREKSDT. The tract at residues 217-242 is disordered; the sequence is QEERQRSREKSDTEAESTSSTSEEMP. Residues 238–466 form the NR LBD domain; it reads SEEMPVERIL…TFLMEMLETP (229 aa).

The protein belongs to the nuclear hormone receptor family. NR2 subfamily. Homodimer. Heterodimer; with a rar molecule. Binds DNA preferentially as a rar/rxr heterodimer.

It localises to the nucleus. Receptor for retinoic acid. Retinoic acid receptors bind as heterodimers to their target response elements in response to their ligands, all-trans or 9-cis retinoic acid, and regulate gene expression in various biological processes. The rar/rxr heterodimers bind to the retinoic acid response elements (RARE) composed of tandem 5'-AGGTCA-3' sites known as DR1-DR5. The high affinity ligand for rxrs is 9-cis retinoic acid. The protein is Retinoic acid receptor RXR-gamma (rxrg) of Xenopus laevis (African clawed frog).